Here is a 220-residue protein sequence, read N- to C-terminus: uncharacterized protein (220 aa).

This is an uncharacterized protein from Acidianus two-tailed virus (ATV).